The following is a 95-amino-acid chain: Small ribosomal subunit protein uS19 (95 aa).

This sequence belongs to the universal ribosomal protein uS19 family.

In terms of biological role, protein S19 forms a complex with S13 that binds strongly to the 16S ribosomal RNA. This Roseiflexus castenholzii (strain DSM 13941 / HLO8) protein is Small ribosomal subunit protein uS19.